A 162-amino-acid chain; its full sequence is Phenazine biosynthesis protein PhzA1 (162 aa).

This sequence belongs to the PhzA/PhzB family.

Its pathway is antibiotic biosynthesis; phenazine biosynthesis. Involved in the biosynthesis of the antibiotic phenazine, a nitrogen-containing heterocyclic molecule. PhzA1 (operon phzA1B1C1E1F1G1) has a role in the biosynthesis of the phenazine during planktonic growth. The polypeptide is Phenazine biosynthesis protein PhzA1 (Pseudomonas aeruginosa (strain ATCC 15692 / DSM 22644 / CIP 104116 / JCM 14847 / LMG 12228 / 1C / PRS 101 / PAO1)).